The sequence spans 268 residues: Inositol monophosphatase 3 (268 aa).

The Mg(2+) site is built by Glu-71, Asp-91, Leu-93, and Asp-94. Glu-71 provides a ligand contact to substrate. Substrate is bound by residues 93-96 (LDGT), 194-196 (GSC), Glu-213, and Asp-221. Asp-221 lines the Mg(2+) pocket.

This sequence belongs to the inositol monophosphatase superfamily. Requires Mg(2+) as cofactor. As to expression, expressed in the shoot apex, roots, stems, leaves, flowers and young and mature green fruits.

The catalysed reaction is a myo-inositol phosphate + H2O = myo-inositol + phosphate. Its pathway is polyol metabolism; myo-inositol biosynthesis; myo-inositol from D-glucose 6-phosphate: step 2/2. In terms of biological role, responsible for the provision of inositol required for synthesis of phosphatidylinositol and polyphosphoinositides. The chain is Inositol monophosphatase 3 (IMP3) from Solanum lycopersicum (Tomato).